Consider the following 123-residue polypeptide: Ribonuclease P protein component (123 aa).

The protein belongs to the RnpA family. As to quaternary structure, consists of a catalytic RNA component (M1 or rnpB) and a protein subunit.

The enzyme catalyses Endonucleolytic cleavage of RNA, removing 5'-extranucleotides from tRNA precursor.. Functionally, RNaseP catalyzes the removal of the 5'-leader sequence from pre-tRNA to produce the mature 5'-terminus. It can also cleave other RNA substrates such as 4.5S RNA. The protein component plays an auxiliary but essential role in vivo by binding to the 5'-leader sequence and broadening the substrate specificity of the ribozyme. The protein is Ribonuclease P protein component of Streptococcus pneumoniae (strain JJA).